A 134-amino-acid polypeptide reads, in one-letter code: Small ribosomal subunit protein uS8c (134 aa).

The protein belongs to the universal ribosomal protein uS8 family. As to quaternary structure, part of the 30S ribosomal subunit.

It localises to the plastid. The protein resides in the chloroplast. Functionally, one of the primary rRNA binding proteins, it binds directly to 16S rRNA central domain where it helps coordinate assembly of the platform of the 30S subunit. The sequence is that of Small ribosomal subunit protein uS8c (rps8) from Chloranthus spicatus (Chulantree).